The chain runs to 96 residues: Small ribosomal subunit protein bS6 (96 aa).

This sequence belongs to the bacterial ribosomal protein bS6 family.

In terms of biological role, binds together with bS18 to 16S ribosomal RNA. In Bacillus cereus (strain G9842), this protein is Small ribosomal subunit protein bS6.